The following is a 114-amino-acid chain: Probable 4-amino-4-deoxy-L-arabinose-phosphoundecaprenol flippase subunit ArnE (114 aa).

3 helical membrane passes run 38-58, 64-84, and 94-114; these read LTLR…LLWL, LPLS…TLAA, and LRHW…SWHL. One can recognise an EamA domain in the interval 43-112; the sequence is LAIAVVSLGL…IIFGILLMSW (70 aa).

This sequence belongs to the ArnE family. Heterodimer of ArnE and ArnF.

The protein localises to the cell inner membrane. It functions in the pathway bacterial outer membrane biogenesis; lipopolysaccharide biosynthesis. Functionally, translocates 4-amino-4-deoxy-L-arabinose-phosphoundecaprenol (alpha-L-Ara4N-phosphoundecaprenol) from the cytoplasmic to the periplasmic side of the inner membrane. This chain is Probable 4-amino-4-deoxy-L-arabinose-phosphoundecaprenol flippase subunit ArnE, found in Yersinia pseudotuberculosis serotype O:1b (strain IP 31758).